The primary structure comprises 206 residues: tRNA(Phe) 7-((3-amino-3-carboxypropyl)-4-demethylwyosine(37)-N(4))-methyltransferase 2 (206 aa).

This sequence belongs to the TYW3 family.

The enzyme catalyses 4-demethyl-7-[(3S)-3-amino-3-carboxypropyl]wyosine(37) in tRNA(Phe) + S-adenosyl-L-methionine = 7-[(3S)-3-amino-3-carboxypropyl]wyosine(37) in tRNA(Phe) + S-adenosyl-L-homocysteine + H(+). S-adenosyl-L-methionine-dependent methyltransferase that acts as a component of the wyosine derivatives biosynthesis pathway. Probably methylates N-4 position of wybutosine-86 to produce wybutosine-72. The polypeptide is tRNA(Phe) 7-((3-amino-3-carboxypropyl)-4-demethylwyosine(37)-N(4))-methyltransferase 2 (Pyrococcus furiosus (strain ATCC 43587 / DSM 3638 / JCM 8422 / Vc1)).